The following is a 253-amino-acid chain: Ubiquinone/menaquinone biosynthesis C-methyltransferase UbiE (253 aa).

S-adenosyl-L-methionine-binding positions include Thr-76, Asp-97, and 125-126 (NA).

Belongs to the class I-like SAM-binding methyltransferase superfamily. MenG/UbiE family.

The enzyme catalyses a 2-demethylmenaquinol + S-adenosyl-L-methionine = a menaquinol + S-adenosyl-L-homocysteine + H(+). It carries out the reaction a 2-methoxy-6-(all-trans-polyprenyl)benzene-1,4-diol + S-adenosyl-L-methionine = a 5-methoxy-2-methyl-3-(all-trans-polyprenyl)benzene-1,4-diol + S-adenosyl-L-homocysteine + H(+). It participates in quinol/quinone metabolism; menaquinone biosynthesis; menaquinol from 1,4-dihydroxy-2-naphthoate: step 2/2. Its pathway is cofactor biosynthesis; ubiquinone biosynthesis. Functionally, methyltransferase required for the conversion of demethylmenaquinol (DMKH2) to menaquinol (MKH2) and the conversion of 2-polyprenyl-6-methoxy-1,4-benzoquinol (DDMQH2) to 2-polyprenyl-3-methyl-6-methoxy-1,4-benzoquinol (DMQH2). This is Ubiquinone/menaquinone biosynthesis C-methyltransferase UbiE from Rhodopseudomonas palustris (strain BisB5).